A 147-amino-acid polypeptide reads, in one-letter code: Hemoglobin subunit beta (147 aa).

V2 is modified (N-acetylvaline). Positions 3-147 constitute a Globin domain; that stretch reads HLTAEEKSAV…VANALAHKYH (145 aa). Phosphothreonine is present on T13. At S45 the chain carries Phosphoserine. K60 carries the N6-acetyllysine modification. H64 provides a ligand contact to heme b. K83 carries the post-translational modification N6-acetyllysine. H93 is a binding site for heme b. An S-nitrosocysteine modification is found at C94. Residue K145 is modified to N6-acetyllysine.

This sequence belongs to the globin family. Heterotetramer of two alpha chains and two beta chains. In terms of tissue distribution, red blood cells.

Involved in oxygen transport from the lung to the various peripheral tissues. The protein is Hemoglobin subunit beta (HBB) of Sapajus apella (Brown-capped capuchin).